The sequence spans 1111 residues: RecBCD enzyme subunit RecC (1111 aa).

The protein belongs to the RecC family. Heterotrimer of RecB, RecC and RecD. All subunits contribute to DNA-binding.

In terms of biological role, a helicase/nuclease that prepares dsDNA breaks (DSB) for recombinational DNA repair. Binds to DSBs and unwinds DNA via a highly rapid and processive ATP-dependent bidirectional helicase activity. Unwinds dsDNA until it encounters a Chi (crossover hotspot instigator) sequence from the 3' direction. Cuts ssDNA a few nucleotides 3' to the Chi site. The properties and activities of the enzyme are changed at Chi. The Chi-altered holoenzyme produces a long 3'-ssDNA overhang and facilitates RecA-binding to the ssDNA for homologous DNA recombination and repair. Holoenzyme degrades any linearized DNA that is unable to undergo homologous recombination. In the holoenzyme this subunit recognizes the wild-type Chi sequence, and when added to isolated RecB increases its ATP-dependent helicase processivity. This is RecBCD enzyme subunit RecC from Buchnera aphidicola subsp. Baizongia pistaciae (strain Bp).